Consider the following 508-residue polypeptide: Cytochrome P450 monooxygenase pkfB (508 aa).

A helical membrane pass occupies residues 9-29; it reads FSLGLSQILVCLALLYAAIHI. 2 N-linked (GlcNAc...) asparagine glycosylation sites follow: asparagine 57 and asparagine 305. Residue cysteine 450 coordinates heme.

It belongs to the cytochrome P450 family. Requires heme as cofactor.

The protein localises to the membrane. It functions in the pathway secondary metabolite biosynthesis. Its function is as follows. Cytochrome P450 monooxygenase; part of the gene cluster that mediates the biosynthesis of aspernidine A, a prenylated isoindolinone. The starting point of the biosynthesis of aspernidin A is the production of orsellinaldehyde by the non-reducing polyketide synthase pkfA. Hydroxylation, methylation of one of the phenol groups, and prenylation, presumably catalyzed by the prenyltransferase pkfE, would be needed to yield aspernidine D. Subsequently, the cytochrome P450 monooxygenase pkfB is responsible for hydroxylation of aspernidine D to yield aspernidine E. The dehydrogenase pkfF may be responsible for further oxidation of aspernidine E to form a dialdehyde intermediate which is further transformed in a series of steps, some of which are enzyme-mediated, to generate aspernidine A. The possibility that additional enzymes outside of the cluster are involved in aspernidine A biosynthesis cannot be excluded. This chain is Cytochrome P450 monooxygenase pkfB, found in Emericella nidulans (strain FGSC A4 / ATCC 38163 / CBS 112.46 / NRRL 194 / M139) (Aspergillus nidulans).